The chain runs to 373 residues: D-alanine--D-alanine ligase A (373 aa).

The region spanning 146 to 355 (KRLAEFAGIP…YGELLSRLVD (210 aa)) is the ATP-grasp domain. 179 to 234 (VEGLSLPVFVKPCNMGSSVGIHKVKTQDALEAALDDAFRYDVKVLVQQGIDAREIE) is a binding site for ATP. Positions 308, 322, and 324 each coordinate Mg(2+).

It belongs to the D-alanine--D-alanine ligase family. Mg(2+) is required as a cofactor. Mn(2+) serves as cofactor.

The protein localises to the cytoplasm. It carries out the reaction 2 D-alanine + ATP = D-alanyl-D-alanine + ADP + phosphate + H(+). The protein operates within cell wall biogenesis; peptidoglycan biosynthesis. In terms of biological role, cell wall formation. In Bradyrhizobium diazoefficiens (strain JCM 10833 / BCRC 13528 / IAM 13628 / NBRC 14792 / USDA 110), this protein is D-alanine--D-alanine ligase A.